The primary structure comprises 59 residues: Large ribosomal subunit protein bL32 (59 aa).

The protein belongs to the bacterial ribosomal protein bL32 family.

This chain is Large ribosomal subunit protein bL32, found in Mesoplasma florum (strain ATCC 33453 / NBRC 100688 / NCTC 11704 / L1) (Acholeplasma florum).